A 110-amino-acid chain; its full sequence is Large ribosomal subunit protein uL24 (110 aa).

Belongs to the universal ribosomal protein uL24 family. Part of the 50S ribosomal subunit.

One of two assembly initiator proteins, it binds directly to the 5'-end of the 23S rRNA, where it nucleates assembly of the 50S subunit. Functionally, one of the proteins that surrounds the polypeptide exit tunnel on the outside of the subunit. This chain is Large ribosomal subunit protein uL24, found in Caldicellulosiruptor saccharolyticus (strain ATCC 43494 / DSM 8903 / Tp8T 6331).